Consider the following 121-residue polypeptide: Large ribosomal subunit protein uL14c (121 aa).

This sequence belongs to the universal ribosomal protein uL14 family. In terms of assembly, part of the 50S ribosomal subunit.

The protein resides in the plastid. The protein localises to the chloroplast. Binds to 23S rRNA. This is Large ribosomal subunit protein uL14c from Emiliania huxleyi (Coccolithophore).